The chain runs to 156 residues: Arginine repressor (156 aa).

The protein belongs to the ArgR family.

The protein resides in the cytoplasm. The protein operates within amino-acid biosynthesis; L-arginine biosynthesis [regulation]. Functionally, regulates arginine biosynthesis genes. In Photorhabdus laumondii subsp. laumondii (strain DSM 15139 / CIP 105565 / TT01) (Photorhabdus luminescens subsp. laumondii), this protein is Arginine repressor.